Reading from the N-terminus, the 74-residue chain is U2-sicaritoxin-Sdo1a (74 aa).

Residues 1-20 form the signal peptide; the sequence is MKLSFCFFLCAIVLFSFAEA. The propeptide occupies 21–39; that stretch reads RINPNQLKRLRELVRDDEP. 3 cysteine pairs are disulfide-bonded: Cys-42–Cys-59, Cys-49–Cys-62, and Cys-58–Cys-71.

As to expression, expressed by the venom gland.

It localises to the secreted. In Hexophthalma dolichocephala (Afrotropical spider), this protein is U2-sicaritoxin-Sdo1a.